A 386-amino-acid polypeptide reads, in one-letter code: Heat-inducible transcription repressor HrcA (386 aa).

The protein belongs to the HrcA family.

Functionally, negative regulator of class I heat shock genes (grpE-dnaK-dnaJ and groELS operons). Prevents heat-shock induction of these operons. The protein is Heat-inducible transcription repressor HrcA of Chlamydia abortus (strain DSM 27085 / S26/3) (Chlamydophila abortus).